The sequence spans 67 residues: Large ribosomal subunit protein bL31 (67 aa).

The protein belongs to the bacterial ribosomal protein bL31 family. Type A subfamily. As to quaternary structure, part of the 50S ribosomal subunit.

Binds the 23S rRNA. The polypeptide is Large ribosomal subunit protein bL31 (Helicobacter acinonychis (strain Sheeba)).